The chain runs to 216 residues: Large ribosomal subunit protein uL3 (216 aa).

N5-methylglutamine is present on glutamine 153.

This sequence belongs to the universal ribosomal protein uL3 family. Part of the 50S ribosomal subunit. Forms a cluster with proteins L14 and L19. Methylated by PrmB.

Its function is as follows. One of the primary rRNA binding proteins, it binds directly near the 3'-end of the 23S rRNA, where it nucleates assembly of the 50S subunit. The polypeptide is Large ribosomal subunit protein uL3 (Burkholderia multivorans (strain ATCC 17616 / 249)).